Reading from the N-terminus, the 114-residue chain is Putative movement protein (114 aa).

A helical membrane pass occupies residues 27-47 (LIGIILLVTVCLTVLWVCIML). Residues 79–114 (RTPFEATGPERERNWEARRQSTTVNPASQPNTGSVF) form a disordered region. Residues 86–97 (GPERERNWEARR) show a composition bias toward basic and acidic residues. Residues 98–114 (QSTTVNPASQPNTGSVF) are compositionally biased toward polar residues.

Belongs to the nanovirus movement protein family.

It localises to the host cell membrane. Its function is as follows. May transport viral genome to neighboring plant cells directly through plasmosdesmata, without any budding. The movement protein allows efficient cell to cell propagation, by bypassing the host cell wall barrier. The chain is Putative movement protein (DNA-M) from Faba bean necrotic yellows virus (isolate Egyptian EV1-93) (FBNYV).